A 395-amino-acid polypeptide reads, in one-letter code: Long-chain-alcohol dehydrogenase 1 (395 aa).

NAD(+) is bound by residues 98–102 (GSALD) and 141–144 (TTSG).

Belongs to the iron-containing alcohol dehydrogenase family. In terms of assembly, homooctamer.

The enzyme catalyses glycerol + NAD(+) = dihydroxyacetone + NADH + H(+). It catalyses the reaction a long-chain primary fatty alcohol + 2 NAD(+) + H2O = a long-chain fatty acid + 2 NADH + 3 H(+). Functionally, long-chain alkyl alcohol dehydrogenase that can oxidize a broad range of alkyl alcohols from ethanol to 1-triacontanol (C2 to C30) as well as 1,3-propanediol and acetaldehyde. The best substrate is ethanol. Also oxidizes glycerol. This is Long-chain-alcohol dehydrogenase 1 (adh1) from Geobacillus thermodenitrificans (strain NG80-2).